The primary structure comprises 490 residues: MSQHETPLYTGLKKHASRQPVQFHIPGHKKGAGMDPEFRQFIGENALSIDLINIEPLDDLHAPKGIIKQAQDLAAEAFGADHTFFSVQGTSGAIMTMVMAVCGPGDKIIIPRNVHKSIMTAIVFSGAVPIFIHPEIDNELGISHGITLESAKRALTEHPDAKGLLVINPTYFGVAADLKSIVELAHSFDVPVLVDEAHGVHIHFHDELPLSAMQAGADIAATSVHKLGGSLTQSSILNMREGLVSKDRVQSILSMLTTTSTSYLLLASLDVARKRLATEGRQLAEETLKLANQTRDRLNQIEGIYCVGSEILGSKAAYSYDPTKLIISVKSLGLTGHDVEKWLRESFNIEVELSDLYNILCIFTPGDSQNDADRLVEALTEIAQQMSEQDVTHQQTEVLLPEIPLLAMTPRDAFYANTEVIPLKEASGRIIAEFVMVYPPGIPIFIPGEIITEENISYIFKNLDAGLPVQGPEDSTLHMIRVIKEQKAIQ.

The residue at position 226 (lysine 226) is an N6-(pyridoxal phosphate)lysine.

Belongs to the Orn/Lys/Arg decarboxylase class-I family. Pyridoxal 5'-phosphate is required as a cofactor.

Its subcellular location is the cytoplasm. The enzyme catalyses L-arginine + H(+) = agmatine + CO2. It functions in the pathway amine and polyamine biosynthesis; agmatine biosynthesis; agmatine from L-arginine: step 1/1. Its function is as follows. Catalyzes the formation of agmatine from arginine. The protein is Arginine decarboxylase (speA) of Bacillus subtilis (strain 168).